A 351-amino-acid polypeptide reads, in one-letter code: MPQKKLLQKLLAGEDFSQEEMILCMNNIMDGLFSEMVIAALLALLQKKGVTPTETAGAYYSLMEKAVTIELDENAVDTCGTGGDHAGTFNISTTASIIANSAGVRIAKHGNRSVTSSCGSADVLEALGFTIDLPPEATKELFQESGFAFLFAPLYHPSMKRVAPVRRELGIRTIFNILGPLINPARAKRQLVGVFNRELMELYTEVLLQTGARRAMIVHAMTAEGIALDEPSLNGPTHIVEIHRGTVTEHTVYPEDFGLARHSLSEIQGGERDENARIIRQILDGSAPAAHRDAALFTTAMACYVSGKARCIDDGLDIAREALESGKSEKKFNEILKINAELSRKYRSVVN.

5-phospho-alpha-D-ribose 1-diphosphate is bound by residues Gly80, 83–84 (GD), Thr88, 90–93 (NIST), 108–116 (KHGNRSVTS), and Ser120. An anthranilate-binding site is contributed by Gly80. Ser92 contributes to the Mg(2+) binding site. Asn111 is an anthranilate binding site. An anthranilate-binding site is contributed by Arg166. The Mg(2+) site is built by Asp229 and Glu230.

Belongs to the anthranilate phosphoribosyltransferase family. In terms of assembly, homodimer. Mg(2+) serves as cofactor.

It catalyses the reaction N-(5-phospho-beta-D-ribosyl)anthranilate + diphosphate = 5-phospho-alpha-D-ribose 1-diphosphate + anthranilate. It participates in amino-acid biosynthesis; L-tryptophan biosynthesis; L-tryptophan from chorismate: step 2/5. Catalyzes the transfer of the phosphoribosyl group of 5-phosphorylribose-1-pyrophosphate (PRPP) to anthranilate to yield N-(5'-phosphoribosyl)-anthranilate (PRA). The sequence is that of Anthranilate phosphoribosyltransferase from Pelodictyon phaeoclathratiforme (strain DSM 5477 / BU-1).